Here is a 225-residue protein sequence, read N- to C-terminus: Biosynthetic peptidoglycan transglycosylase (225 aa).

Residues 8 to 28 form a helical membrane-spanning segment; sequence VLLIFIGAILLIQLWIFSSLV.

It belongs to the glycosyltransferase 51 family.

The protein localises to the cell inner membrane. The enzyme catalyses [GlcNAc-(1-&gt;4)-Mur2Ac(oyl-L-Ala-gamma-D-Glu-L-Lys-D-Ala-D-Ala)](n)-di-trans,octa-cis-undecaprenyl diphosphate + beta-D-GlcNAc-(1-&gt;4)-Mur2Ac(oyl-L-Ala-gamma-D-Glu-L-Lys-D-Ala-D-Ala)-di-trans,octa-cis-undecaprenyl diphosphate = [GlcNAc-(1-&gt;4)-Mur2Ac(oyl-L-Ala-gamma-D-Glu-L-Lys-D-Ala-D-Ala)](n+1)-di-trans,octa-cis-undecaprenyl diphosphate + di-trans,octa-cis-undecaprenyl diphosphate + H(+). Its pathway is cell wall biogenesis; peptidoglycan biosynthesis. Functionally, peptidoglycan polymerase that catalyzes glycan chain elongation from lipid-linked precursors. The sequence is that of Biosynthetic peptidoglycan transglycosylase from Acinetobacter baumannii (strain AB307-0294).